The following is a 389-amino-acid chain: Protein Wnt-10b (389 aa).

An N-terminal signal peptide occupies residues 1 to 28 (MLEEPRPRPPPSGLAGLLFLALCSRALS). Thr46 is subject to Phosphothreonine. 11 disulfides stabilise this stretch: Cys83–Cys94, Cys136–Cys144, Cys146–Cys199, Cys247–Cys261, Cys249–Cys256, Cys318–Cys349, Cys334–Cys344, Cys348–Cys388, Cys364–Cys379, Cys366–Cys376, and Cys371–Cys372. Asn93 carries an N-linked (GlcNAc...) asparagine glycan. Residues 171-197 (KSFPHSLPSPGPGSSPSPGPQDTWEWG) are disordered. The span at 177-189 (LPSPGPGSSPSPG) shows a compositional bias: pro residues. Residue Ser253 is the site of O-palmitoleoyl serine; by PORCN attachment. The N-linked (GlcNAc...) asparagine glycan is linked to Asn335.

This sequence belongs to the Wnt family. In terms of assembly, forms a soluble 1:1 complex with AFM; this prevents oligomerization and is required for prolonged biological activity. The complex with AFM may represent the physiological form in body fluids. In terms of processing, palmitoleoylation is required for efficient binding to frizzled receptors. Depalmitoleoylation leads to Wnt signaling pathway inhibition. In terms of tissue distribution, detected in most adult tissues. Highest levels were found in heart and skeletal muscle. Low levels are found in brain.

It is found in the secreted. The protein resides in the extracellular space. The protein localises to the extracellular matrix. Member of the Wnt ligand gene family that encodes for secreted proteins, which activate the Wnt signaling cascade. Specifically activates canonical Wnt/beta-catenin signaling and thus triggers beta-catenin/LEF/TCF-mediated transcriptional programs. Involved in signaling networks controlling stemness, pluripotency and cell fate decisions. Acts in the immune system, mammary gland, adipose tissue, bone and skin. The polypeptide is Protein Wnt-10b (WNT10B) (Homo sapiens (Human)).